The following is a 741-amino-acid chain: Nuclear pore complex protein Nup88 (741 aa).

A2 bears the N-acetylalanine mark. 6 positions are modified to phosphoserine: S35, S50, S379, S437, S442, and S517. T525 carries the post-translational modification Phosphothreonine. The residue at position 540 (S540) is a Phosphoserine. Positions 585 to 651 (EEIQRRVKLL…KLLHSFHSEL (67 aa)) form a coiled coil. S698 carries the post-translational modification Phosphoserine.

In terms of assembly, interacts with NUP214/CAN. Interacts with NUP62 and NUP98. In terms of tissue distribution, ubiquitous.

Its subcellular location is the nucleus. The protein localises to the nuclear pore complex. In terms of biological role, component of nuclear pore complex. The sequence is that of Nuclear pore complex protein Nup88 (NUP88) from Homo sapiens (Human).